We begin with the raw amino-acid sequence, 529 residues long: MTSETVIAPSLSTAQNDGTFTYDKVKSTAKERKHLNLKNPSDANEIKSKIWNYYSLSELIQYLGQKENDDFKYKRITLQFPDNLICDSATIVHELQRELNIVPQANQDTGESNTAQRVWILADTSYSACCVDEVAAEHVRSDLVVHFGDACLNEIDKLQAVFVLGKPTLDVDAIVKQIKTAYSTEQKVVLMSDAPHTYLLPEIAKQLPDYDILIADLPKTSRAKIIGYTPPPTGHKKFNRVFNTDTVEFGKYELFHITSPESPRLLQLTTNFASVTTYDPISGTVSTGPFPNLMRRYKYVHQARMAGTVGILVNTLSLANTKVLLNTIKEKIKEAGKKHYIFVVGKPNVAKLANFESVDIWCILGCDHQGIIIDQINEYYKPIVTPYELLLGLSDELSWTGKWVVDYKSVLEEYGNEVIQQNEDPDTDEDLPPVFDPVTGRYVSTSKPLRQINHLMVTSSEQGGVDDHDNQLVKRFSNAVAIKGTVSTSAIHLQNRHWTGLGSDYTEDENATGALVEDGRKGIARGYDI.

Residues Cys130, Cys151, and Cys366 each contribute to the [4Fe-4S] cluster site.

It belongs to the DPH1/DPH2 family. DPH2 subfamily. Component of the 2-(3-amino-3-carboxypropyl)histidine synthase complex composed of DPH1, DPH2, DPH3 and a NADH-dependent reductase, predominantly CBR1. The cofactor is [4Fe-4S] cluster.

It is found in the cytoplasm. It participates in protein modification; peptidyl-diphthamide biosynthesis. In terms of biological role, required for the first step of diphthamide biosynthesis, a post-translational modification of histidine which occurs in elongation factor 2. DPH1 and DPH2 transfer a 3-amino-3-carboxypropyl (ACP) group from S-adenosyl-L-methionine (SAM) to a histidine residue, the reaction is assisted by a reduction system comprising DPH3 and a NADH-dependent reductase, predominantly CBR1. Facilitates the reduction of the catalytic iron-sulfur cluster found in the DPH1 subunit. This Candida albicans (strain SC5314 / ATCC MYA-2876) (Yeast) protein is 2-(3-amino-3-carboxypropyl)histidine synthase subunit 2-1 (DPH2).